A 339-amino-acid polypeptide reads, in one-letter code: Small ribosomal subunit biogenesis GTPase RsgA (339 aa).

Residues 111–271 form the CP-type G domain; sequence MRGLLKPVAA…LIDSPGIREF (161 aa). GTP-binding positions include 159 to 162 and 213 to 221; these read NKAD and GQSGVGKSS. Zn(2+)-binding residues include Cys295, Cys300, His302, and Cys308.

Belongs to the TRAFAC class YlqF/YawG GTPase family. RsgA subfamily. As to quaternary structure, monomer. Associates with 30S ribosomal subunit, binds 16S rRNA. Zn(2+) is required as a cofactor.

Its subcellular location is the cytoplasm. Its function is as follows. One of several proteins that assist in the late maturation steps of the functional core of the 30S ribosomal subunit. Helps release RbfA from mature subunits. May play a role in the assembly of ribosomal proteins into the subunit. Circularly permuted GTPase that catalyzes slow GTP hydrolysis, GTPase activity is stimulated by the 30S ribosomal subunit. This is Small ribosomal subunit biogenesis GTPase RsgA from Pseudomonas aeruginosa (strain LESB58).